A 325-amino-acid polypeptide reads, in one-letter code: Peroxidase 1 (325 aa).

An N-terminal signal peptide occupies residues 1–21 (MAIKNILALVVLLSVVGVSVA). 4 disulfides stabilise this stretch: cysteine 35–cysteine 113, cysteine 68–cysteine 73, cysteine 119–cysteine 321, and cysteine 198–cysteine 230. Histidine 66 (proton acceptor) is an active-site residue. Ca(2+) is bound by residues aspartate 67, valine 70, glycine 72, aspartate 74, and serine 76. Proline 161 lines the substrate pocket. Residue histidine 191 participates in heme b binding. Threonine 192 provides a ligand contact to Ca(2+). N-linked (GlcNAc...) asparagine glycosylation occurs at asparagine 207. Ca(2+) contacts are provided by aspartate 242, serine 245, and aspartate 250.

Belongs to the peroxidase family. Classical plant (class III) peroxidase subfamily. It depends on heme b as a cofactor. The cofactor is Ca(2+). As to expression, slightly expressed in roots.

It is found in the secreted. It carries out the reaction 2 a phenolic donor + H2O2 = 2 a phenolic radical donor + 2 H2O. In terms of biological role, removal of H(2)O(2), oxidation of toxic reductants, biosynthesis and degradation of lignin, suberization, auxin catabolism, response to environmental stresses such as wounding, pathogen attack and oxidative stress. These functions might be dependent on each isozyme/isoform in each plant tissue. The chain is Peroxidase 1 (PER1) from Arabidopsis thaliana (Mouse-ear cress).